The following is a 192-amino-acid chain: Probable Brix domain-containing ribosomal biogenesis protein (192 aa).

The 190-residue stretch at 2-191 folds into the Brix domain; it reads RPAAITTSQR…DFRTKDERMK (190 aa).

Its function is as follows. Probably involved in the biogenesis of the ribosome. The polypeptide is Probable Brix domain-containing ribosomal biogenesis protein (Methanopyrus kandleri (strain AV19 / DSM 6324 / JCM 9639 / NBRC 100938)).